A 214-amino-acid polypeptide reads, in one-letter code: Pyridoxine/pyridoxamine 5'-phosphate oxidase (214 aa).

Residues 8–11 and arginine 66 contribute to the substrate site; that span reads RLSY. FMN is bound by residues 61 to 66, 76 to 77, lysine 83, and glutamine 105; these read RTVLLR and FT. Residues tyrosine 123, arginine 127, and serine 131 each coordinate substrate. The disordered stretch occupies residues 126–146; the sequence is SRPRESQLAAHASDPQSAPVS. FMN contacts are provided by residues 141-142 and tryptophan 187; that span reads QS. 193-195 contributes to the substrate binding site; it reads RMH. Arginine 197 is a binding site for FMN.

This sequence belongs to the pyridoxamine 5'-phosphate oxidase family. Homodimer. FMN serves as cofactor.

It carries out the reaction pyridoxamine 5'-phosphate + O2 + H2O = pyridoxal 5'-phosphate + H2O2 + NH4(+). The catalysed reaction is pyridoxine 5'-phosphate + O2 = pyridoxal 5'-phosphate + H2O2. The protein operates within cofactor metabolism; pyridoxal 5'-phosphate salvage; pyridoxal 5'-phosphate from pyridoxamine 5'-phosphate: step 1/1. It functions in the pathway cofactor metabolism; pyridoxal 5'-phosphate salvage; pyridoxal 5'-phosphate from pyridoxine 5'-phosphate: step 1/1. Functionally, catalyzes the oxidation of either pyridoxine 5'-phosphate (PNP) or pyridoxamine 5'-phosphate (PMP) into pyridoxal 5'-phosphate (PLP). The protein is Pyridoxine/pyridoxamine 5'-phosphate oxidase of Deinococcus deserti (strain DSM 17065 / CIP 109153 / LMG 22923 / VCD115).